The primary structure comprises 176 residues: Crossover junction endodeoxyribonuclease RuvC (176 aa).

Residues Asp10, Glu69, and Asp141 contribute to the active site. Mg(2+) is bound by residues Asp10, Glu69, and Asp141.

This sequence belongs to the RuvC family. In terms of assembly, homodimer which binds Holliday junction (HJ) DNA. The HJ becomes 2-fold symmetrical on binding to RuvC with unstacked arms; it has a different conformation from HJ DNA in complex with RuvA. In the full resolvosome a probable DNA-RuvA(4)-RuvB(12)-RuvC(2) complex forms which resolves the HJ. Mg(2+) serves as cofactor.

The protein resides in the cytoplasm. The catalysed reaction is Endonucleolytic cleavage at a junction such as a reciprocal single-stranded crossover between two homologous DNA duplexes (Holliday junction).. Its function is as follows. The RuvA-RuvB-RuvC complex processes Holliday junction (HJ) DNA during genetic recombination and DNA repair. Endonuclease that resolves HJ intermediates. Cleaves cruciform DNA by making single-stranded nicks across the HJ at symmetrical positions within the homologous arms, yielding a 5'-phosphate and a 3'-hydroxyl group; requires a central core of homology in the junction. The consensus cleavage sequence is 5'-(A/T)TT(C/G)-3'. Cleavage occurs on the 3'-side of the TT dinucleotide at the point of strand exchange. HJ branch migration catalyzed by RuvA-RuvB allows RuvC to scan DNA until it finds its consensus sequence, where it cleaves and resolves the cruciform DNA. The polypeptide is Crossover junction endodeoxyribonuclease RuvC (Dichelobacter nodosus (strain VCS1703A)).